The sequence spans 284 residues: NAD kinase (284 aa).

The active-site Proton acceptor is D60. NAD(+) contacts are provided by residues D60–G61, N134–D135, R145, K162, D164, T175–S180, and Q234.

It belongs to the NAD kinase family. It depends on a divalent metal cation as a cofactor.

The protein localises to the cytoplasm. It carries out the reaction NAD(+) + ATP = ADP + NADP(+) + H(+). Involved in the regulation of the intracellular balance of NAD and NADP, and is a key enzyme in the biosynthesis of NADP. Catalyzes specifically the phosphorylation on 2'-hydroxyl of the adenosine moiety of NAD to yield NADP. This chain is NAD kinase, found in Clostridium beijerinckii (strain ATCC 51743 / NCIMB 8052) (Clostridium acetobutylicum).